Reading from the N-terminus, the 344-residue chain is Phenylalanine--tRNA ligase alpha subunit (344 aa).

Glu-256 serves as a coordination point for Mg(2+).

It belongs to the class-II aminoacyl-tRNA synthetase family. Phe-tRNA synthetase alpha subunit type 1 subfamily. Tetramer of two alpha and two beta subunits. It depends on Mg(2+) as a cofactor.

Its subcellular location is the cytoplasm. It carries out the reaction tRNA(Phe) + L-phenylalanine + ATP = L-phenylalanyl-tRNA(Phe) + AMP + diphosphate + H(+). The chain is Phenylalanine--tRNA ligase alpha subunit from Bacillus anthracis (strain CDC 684 / NRRL 3495).